Here is a 650-residue protein sequence, read N- to C-terminus: MNPDQYSQAIERLNAWAHAYYVLDAPLATDEEYDQLYHEALAFERQNPERIHPASPTQRIGGAPLEGFQKASHLERMWSLEDVFDFGELKSWAERLYKQFPHATFVCDPKFDGASLNLLYEEGRLVRAATRGDGLIGEDVTQNARTIPSIPLSIPLLERIEIRGEVVIPKEDFEKLQEERLRENESPFANPRNAAAGSLRQLDPAITAKRKLRFIPWGVGAHPFKTGSFFEIMKSLESYGFIRSPERTRCHNIHEIERVYALLVSERSTHPVMLDGMVVRVDEIAYQRELGYTIKAPRFACAYKFPAIEKKARLLSITLQVGRSGVVTPVANLEPVEIEGAMISRATLHNFDEIKRLDVREGDWVSLIRSGDVIPKIIQPFAHLRSGEEKPLSRPTHCPECGSELLVEEVLIKCQNLSCPARIKNSLIHFASKKALNIDGLGEKIIEQLFEAGLIKEFEDLFSLTKESLLSLEGFKEKKAQNLLDAIQGVRGCDLWRFINALGIEHIGEGAAKKLSHAFGLAFHLQNHEAIIGLEGFGEEMAQSLLEFCRVNHERIEHLLGLIEPLAPIQLTPQDSPIAGKSFVITGTLSAPREHFVELLTSLGAKVVSSVSKKSDFLLYGESAGSKLEKARELGVRCVNEEELGEILES.

Residues aspartate 30–aspartate 34, serine 79–leucine 80, and aspartate 108 contribute to the NAD(+) site. The active-site N6-AMP-lysine intermediate is lysine 110. The NAD(+) site is built by arginine 131, glutamate 165, and lysine 304. Zn(2+) contacts are provided by cysteine 398, cysteine 401, cysteine 414, and cysteine 419. A BRCT domain is found at proline 573–serine 650.

Belongs to the NAD-dependent DNA ligase family. LigA subfamily. Mg(2+) is required as a cofactor. Mn(2+) serves as cofactor.

The enzyme catalyses NAD(+) + (deoxyribonucleotide)n-3'-hydroxyl + 5'-phospho-(deoxyribonucleotide)m = (deoxyribonucleotide)n+m + AMP + beta-nicotinamide D-nucleotide.. Functionally, DNA ligase that catalyzes the formation of phosphodiester linkages between 5'-phosphoryl and 3'-hydroxyl groups in double-stranded DNA using NAD as a coenzyme and as the energy source for the reaction. It is essential for DNA replication and repair of damaged DNA. This is DNA ligase from Wolinella succinogenes (strain ATCC 29543 / DSM 1740 / CCUG 13145 / JCM 31913 / LMG 7466 / NCTC 11488 / FDC 602W) (Vibrio succinogenes).